We begin with the raw amino-acid sequence, 142 residues long: Galectin-10 (142 aa).

N-acetylserine is present on S2. One can recognise a Galectin domain in the interval 6–138 (VPYTEAASLS…DISLTKFNVS (133 aa)).

As to quaternary structure, interacts with CEL. As to expression, expressed abundantly in the bone marrow. Expressed exclusively by eosinophils and basophils. Not detected in monocytes and neutrophils. Expressed in CD25-positive regulatory T-cells (Treg) (at protein level). Found in intestinal tissue from patients with Celiac disease, expression is directly related to the histological grade of mucosal damage and to the number of eosinophils found in the duodenal lesion (at protein level). Found in sputum of patients with eosinophilic inflammatory diseases such as asthma (at protein level).

The protein localises to the cytoplasm. It is found in the cytosol. The protein resides in the cytoplasmic granule. Regulates immune responses through the recognition of cell-surface glycans. Essential for the anergy and suppressive function of CD25-positive regulatory T-cells (Treg). This chain is Galectin-10 (CLC), found in Homo sapiens (Human).